The following is a 361-amino-acid chain: Deoxyribonuclease-2-beta (361 aa).

The N-terminal stretch at methionine 1–alanine 27 is a signal peptide. Asparagine 81, asparagine 103, asparagine 119, and asparagine 278 each carry an N-linked (GlcNAc...) asparagine glycan.

Belongs to the DNase II family. In terms of tissue distribution, highly expressed in the eye lens and in salivary gland. Detected at lower levels in lung, prostate and lymph node. Isoform 2 is lung specific.

The protein localises to the lysosome. It catalyses the reaction Endonucleolytic cleavage to nucleoside 3'-phosphates and 3'-phosphooligonucleotide end-products.. Functionally, hydrolyzes DNA under acidic conditions. Does not require divalent cations for activity. Participates in the degradation of nuclear DNA during lens cell differentiation. The chain is Deoxyribonuclease-2-beta (DNASE2B) from Homo sapiens (Human).